The following is a 309-amino-acid chain: Succinoglycan biosynthesis protein ExoM (309 aa).

This sequence belongs to the glycosyltransferase 2 family.

It is found in the cell inner membrane. It functions in the pathway glycan metabolism; exopolysaccharide biosynthesis. In terms of biological role, glycosyltransferase required for the synthesis of succinoglycan (EPS I). Needed for the addition of the fourth sugar (glucose), catalyzes the formation of a beta-1,4 linkage between the third acetylated sugar and the fourth sugar. The sequence is that of Succinoglycan biosynthesis protein ExoM (exoM) from Rhizobium meliloti (strain 1021) (Ensifer meliloti).